We begin with the raw amino-acid sequence, 208 residues long: MKRPIFIGITGGTGSGKSTIAKEIYRQFGEDCIAMIEQDSYYKDQSHLSMEDRVKTNYDHPNAFDNNLLVSHLESLLNGHSIQKPSYDFSIHNRIEDTTKVEPKEIVIVEGILILEDPRIRELLDIKIYVDTDADVRIIRRMVRDINERGRTMESVINQYLNVVKPMHNQFTEPTKKFADIIIPEGGHNKVAIDIIVAKIKEVLGKYE.

Residue 11–18 (GGTGSGKS) coordinates ATP.

The protein belongs to the uridine kinase family.

Its subcellular location is the cytoplasm. It catalyses the reaction uridine + ATP = UMP + ADP + H(+). It carries out the reaction cytidine + ATP = CMP + ADP + H(+). The protein operates within pyrimidine metabolism; CTP biosynthesis via salvage pathway; CTP from cytidine: step 1/3. It functions in the pathway pyrimidine metabolism; UMP biosynthesis via salvage pathway; UMP from uridine: step 1/1. The protein is Uridine kinase of Clostridium perfringens (strain ATCC 13124 / DSM 756 / JCM 1290 / NCIMB 6125 / NCTC 8237 / Type A).